The primary structure comprises 84 residues: Large ribosomal subunit protein bL27c (84 aa).

The segment at 1–23 (MAHKKGAGSTKNGRDSNAKRLGV) is disordered.

This sequence belongs to the bacterial ribosomal protein bL27 family.

The protein localises to the plastid. It localises to the chloroplast. The sequence is that of Large ribosomal subunit protein bL27c from Thalassiosira pseudonana (Marine diatom).